A 314-amino-acid chain; its full sequence is MGCHNSKVCGQVSKKKKKNKAQEGEKRTKDIKLQDGRGTHSSEEERCCLENQLENYEWQLKILHAVLTASGDQEREQLLKDHPGDICTLVHSITEKVKTEISADLNDLHEQQMRSVSEQHQSETEELQRLHSEEKNVLNESHAAAEEALKDQIEDLTSELKLFNELKRRAEASTLKRDLQRNIETHGSPGEFWEQEQESLLFVIEMKRQNLQDQGNKLLQMEAQVEKNLSLEDQLLQALQQNEDFRVRIENYQSLIQQLSKEQNDMQEVLEKQSLQNQKLIQEKEELLFKLLHRRDSCSTFHLPSVIPTQVSPS.

A compositionally biased stretch (low complexity) spans 1–12 (MGCHNSKVCGQV). Disordered regions lie at residues 1-43 (MGCH…HSSE) and 114-133 (RSVS…LHSE). Glycine 2 is lipidated: N-myristoyl glycine. Basic and acidic residues-rich tracts occupy residues 20–43 (KAQE…HSSE) and 120–133 (HQSE…LHSE). The stretch at 106-291 (NDLHEQQMRS…QEKEELLFKL (186 aa)) forms a coiled coil.

Belongs to the CCDC69 family.

It localises to the cytoplasm. Its subcellular location is the cytoskeleton. The protein localises to the spindle. The protein resides in the midbody. May act as a scaffold to regulate the recruitment and assembly of spindle midzone components. The polypeptide is Coiled-coil domain-containing protein 69 (ccdc69) (Danio rerio (Zebrafish)).